The following is a 301-amino-acid chain: Large ribosomal subunit protein uL18 (301 aa).

This sequence belongs to the universal ribosomal protein uL18 family. Component of the large ribosomal subunit (LSU). Mature N.crassa ribosomes consist of a small (40S) and a large (60S) subunit. The 40S small subunit contains 1 molecule of ribosomal RNA (18S rRNA) and at least 32 different proteins. The large 60S subunit contains 3 rRNA molecules (26S, 5.8S and 5S rRNA) and at least 42 different proteins.

The protein resides in the cytoplasm. Functionally, component of the ribosome, a large ribonucleoprotein complex responsible for the synthesis of proteins in the cell. The small ribosomal subunit (SSU) binds messenger RNAs (mRNAs) and translates the encoded message by selecting cognate aminoacyl-transfer RNA (tRNA) molecules. The large subunit (LSU) contains the ribosomal catalytic site termed the peptidyl transferase center (PTC), which catalyzes the formation of peptide bonds, thereby polymerizing the amino acids delivered by tRNAs into a polypeptide chain. The nascent polypeptides leave the ribosome through a tunnel in the LSU and interact with protein factors that function in enzymatic processing, targeting, and the membrane insertion of nascent chains at the exit of the ribosomal tunnel. In Neurospora crassa (strain ATCC 24698 / 74-OR23-1A / CBS 708.71 / DSM 1257 / FGSC 987), this protein is Large ribosomal subunit protein uL18 (rpl-5).